A 766-amino-acid chain; its full sequence is BMP/retinoic acid-inducible neural-specific protein 3 (766 aa).

Positions 1 to 33 (MIWRRRAGAELSSLMALWEWIVLSLHCWVLAVA) are cleaved as a signal peptide. Positions 74–264 (RYKIYREFGR…FVQAALSYIA (191 aa)) constitute an MACPF domain. N-linked (GlcNAc...) asparagine glycans are attached at residues N168, N337, N456, N562, N609, and N641.

It belongs to the BRINP family. Expressed in olfactory bulb, cerebellum and neuronal layers in hippocampus.

It localises to the secreted. Its subcellular location is the mitochondrion. Functionally, inhibits neuronal cell proliferation by negative regulation of the cell cycle transition. Promotes pituitary gonadotrope cell proliferation, migration and invasion, when overexpressed. May play a role in cell pituitary tumor development. The polypeptide is BMP/retinoic acid-inducible neural-specific protein 3 (Brinp3) (Rattus norvegicus (Rat)).